The chain runs to 292 residues: Bifunctional protein FolD (292 aa).

NADP(+) is bound by residues G166–S168, S191, and I232.

The protein belongs to the tetrahydrofolate dehydrogenase/cyclohydrolase family. In terms of assembly, homodimer.

The enzyme catalyses (6R)-5,10-methylene-5,6,7,8-tetrahydrofolate + NADP(+) = (6R)-5,10-methenyltetrahydrofolate + NADPH. The catalysed reaction is (6R)-5,10-methenyltetrahydrofolate + H2O = (6R)-10-formyltetrahydrofolate + H(+). The protein operates within one-carbon metabolism; tetrahydrofolate interconversion. Its function is as follows. Catalyzes the oxidation of 5,10-methylenetetrahydrofolate to 5,10-methenyltetrahydrofolate and then the hydrolysis of 5,10-methenyltetrahydrofolate to 10-formyltetrahydrofolate. The chain is Bifunctional protein FolD from Wolbachia pipientis wMel.